A 338-amino-acid chain; its full sequence is Fructose-1,6-bisphosphatase class 1 (338 aa).

4 residues coordinate Mg(2+): Glu-92, Asp-115, Leu-117, and Asp-118. Substrate contacts are provided by residues 118 to 121 (DGSS), Asn-211, Tyr-244, 262 to 264 (YLY), and Lys-274. Glu-280 provides a ligand contact to Mg(2+).

Belongs to the FBPase class 1 family. In terms of assembly, homotetramer. Requires Mg(2+) as cofactor.

The protein localises to the cytoplasm. It catalyses the reaction beta-D-fructose 1,6-bisphosphate + H2O = beta-D-fructose 6-phosphate + phosphate. It participates in carbohydrate biosynthesis; gluconeogenesis. This Vibrio vulnificus (strain YJ016) protein is Fructose-1,6-bisphosphatase class 1.